The chain runs to 163 residues: Type VII secretion system protein EsaG (163 aa).

Interacts with EssD (via C-terminus). Interacts with EssE.

Its subcellular location is the cytoplasm. Component of the type VII secretion system (Ess). Also acts as part of toxin-antitoxin system. Counteracts the toxic effect of EssD via direct interaction. This chain is Type VII secretion system protein EsaG, found in Staphylococcus aureus (strain NCTC 8325 / PS 47).